A 122-amino-acid polypeptide reads, in one-letter code: Large ribosomal subunit protein uL14 (122 aa).

It belongs to the universal ribosomal protein uL14 family. Part of the 50S ribosomal subunit. Forms a cluster with proteins L3 and L19. In the 70S ribosome, L14 and L19 interact and together make contacts with the 16S rRNA in bridges B5 and B8.

Functionally, binds to 23S rRNA. Forms part of two intersubunit bridges in the 70S ribosome. The polypeptide is Large ribosomal subunit protein uL14 (Acidiphilium cryptum (strain JF-5)).